We begin with the raw amino-acid sequence, 427 residues long: Serine--tRNA ligase (427 aa).

L-serine is bound at residue 231–233 (TAE). 262–264 (RSE) lines the ATP pocket. Glu285 lines the L-serine pocket. 349–352 (EISS) contributes to the ATP binding site. Ser385 serves as a coordination point for L-serine.

This sequence belongs to the class-II aminoacyl-tRNA synthetase family. Type-1 seryl-tRNA synthetase subfamily. In terms of assembly, homodimer. The tRNA molecule binds across the dimer.

It localises to the cytoplasm. The catalysed reaction is tRNA(Ser) + L-serine + ATP = L-seryl-tRNA(Ser) + AMP + diphosphate + H(+). It carries out the reaction tRNA(Sec) + L-serine + ATP = L-seryl-tRNA(Sec) + AMP + diphosphate + H(+). It functions in the pathway aminoacyl-tRNA biosynthesis; selenocysteinyl-tRNA(Sec) biosynthesis; L-seryl-tRNA(Sec) from L-serine and tRNA(Sec): step 1/1. Its function is as follows. Catalyzes the attachment of serine to tRNA(Ser). Is also able to aminoacylate tRNA(Sec) with serine, to form the misacylated tRNA L-seryl-tRNA(Sec), which will be further converted into selenocysteinyl-tRNA(Sec). The polypeptide is Serine--tRNA ligase (Hahella chejuensis (strain KCTC 2396)).